We begin with the raw amino-acid sequence, 434 residues long: RNA polymerase II holoenzyme cyclin-like subunit (434 aa).

The Cyclin N-terminal domain occupies 23–155 (EARRRVLLLE…LIEEMDSYLL (133 aa)). Low complexity predominate over residues 248-278 (GSSTNPININNNNNTNTSNNNGTTSTTTTTT). Disordered stretches follow at residues 248–292 (GSST…DNTE), 301–320 (LTKS…DIDN), and 330–362 (QIQN…GQIS). A compositionally biased stretch (low complexity) spans 330–359 (QIQNQTQHQHQESTHNNTSSTNTGRNGING).

The protein belongs to the cyclin family. Cyclin C subfamily. In terms of assembly, component of the SRB8-11 complex, a regulatory module of the Mediator complex.

The protein localises to the nucleus. Functionally, component of the SRB8-11 complex. The SRB8-11 complex is a regulatory module of the Mediator complex which is itself involved in regulation of basal and activated RNA polymerase II-dependent transcription. The SRB8-11 complex may be involved in the transcriptional repression of a subset of genes regulated by Mediator. It may inhibit the association of the Mediator complex with RNA polymerase II to form the holoenzyme complex. The SRB8-11 complex phosphorylates the C-terminal domain (CTD) of the largest subunit of RNA polymerase II. The sequence is that of RNA polymerase II holoenzyme cyclin-like subunit (SSN8) from Candida albicans (strain SC5314 / ATCC MYA-2876) (Yeast).